The chain runs to 450 residues: MDADKIVFKVNNQVVSLKPEIIVDQYEYKYPAIKDLKKPCITLGKAPDLNKAYKSVLSGMNAAKLDPDDVCSYLAAAMQFFEGTCPEDWTSYGILIARKGDRITPNSLVEIKRTDVEGNWALTGGMELTRDPTVSEHASLVGLLLSLYRLSKISGQNTGNYKTNIADRIEQIFETAPFVKIVEHHTLMTTHKMCANWSTIPNFRFLAGTYDMFFSRIEHLYSAIRVGTVVTAYEDCSGLVSFTGFIKQINLTAREAILYFFHKNFEEEIRRMFEPGQETAVPHSYFIHFRSLGLSGKSPYSSNAVGHVFNLIHFVGCYMGQVRSLNATVIAACAPHEMSVLGGYLGEEFFGKGTFERRFFRDEKELQEYEAAELTKTDVALADDGTVNSDDEDYFSGETRSPEAVYTRIMMNGGRLKRSHIRRYVSVSSNHQARPNSFAEFLNKTYSNDS.

Position 389 is a phosphoserine; by host CK2 (Ser389).

The protein belongs to the lyssavirus nucleocapsid protein family. In terms of assembly, homomultimerizes to form the nucleocapsid. Binds to viral genomic RNA. In nucleocapsid, binds protein P and thereby positions the polymerase on the template. Protein P acts as a chaperone on free protein N to prevent it from aggregation before encapsidating genomic RNA. Phosphorylated by host CK2. Unphosphorylated protein N seems to have a better affinity for leader viral promoter encapsidation. Phosphorylation of protein N in ribonucleocapsid may stabilize the interaction with protein P, thereby playing an important role in viral transcription/replication.

The protein localises to the virion. It is found in the host cytoplasm. Encapsidates the genome in a ratio of one protein N per nine ribonucleotides, protecting it from nucleases. If expressed without protein P it binds non-specifically RNA and therefore can bind it's own mRNA. Interaction with protein P abolishes any non-specific RNA binding, and prevents phosphorylation. The soluble N-P complex encapsidates specifically the genomic RNA, with protein N protecting the genome like a pearl necklace. The encapsidated genomic RNA is termed the nucleocapsid (NC) and serves as template for viral transcription and replication. Protein N binds protein P in the NC through a different interaction, and can be phosphorylated. Subsequent viral replication is dependent on intracellular concentration of newly synthesized protein N. During replication, encapsidation by protein N is coupled to RNA synthesis and all replicative products are resistant to nucleases. The sequence is that of Nucleoprotein (N) from Homo sapiens (Human).